Reading from the N-terminus, the 217-residue chain is DPDKCKTIRVESWSYKYAEKVVEDASYVLNMTVVDRQSAAACTLGESFGYQKATLWVDHGCRADFKVCYLPVMPTECQTLRVESWNYKYAEKVVEGAALFINMTVEDRQSEASCDLDKSFGFYNQNSTVWVNHGCRADFNICYLKGAVTTSTINVSSWNYQYATKVLPAASCIYSMRVVNQQSAAPCTLGTTYGFVANTMWVDDGCRADFKPSYYSP.

Disulfide bonds link Cys5/Cys187, Cys42/Cys68, Cys61/Cys77, Cys114/Cys135, and Cys142/Cys206. Residue Asn30 is glycosylated (N-linked (GlcNAc...) asparagine). N-linked (GlcNAc...) asparagine glycans are attached at residues Asn102 and Asn126.

In terms of assembly, homodimer; disulfide-linked. Post-translationally, contains disulfide bonds.

In terms of biological role, binds in decreasing order of affinity: galacturonic acid, D-galactosamine, methyl-alpha-D-galactopyranoside and further galactose-containing carbohydrates. Has hemagglutinating activity against human and rabbit erythrocytes. The chain is Lectin ADEL from Aplysia dactylomela (Spotted sea hare).